We begin with the raw amino-acid sequence, 190 residues long: dTTP/UTP pyrophosphatase (190 aa).

The Proton acceptor role is filled by aspartate 71.

This sequence belongs to the Maf family. YhdE subfamily. A divalent metal cation serves as cofactor.

The protein resides in the cytoplasm. It carries out the reaction dTTP + H2O = dTMP + diphosphate + H(+). It catalyses the reaction UTP + H2O = UMP + diphosphate + H(+). Its function is as follows. Nucleoside triphosphate pyrophosphatase that hydrolyzes dTTP and UTP. May have a dual role in cell division arrest and in preventing the incorporation of modified nucleotides into cellular nucleic acids. This Xanthomonas axonopodis pv. citri (strain 306) protein is dTTP/UTP pyrophosphatase.